Reading from the N-terminus, the 1400-residue chain is Tiny macrocysts protein C (1400 aa).

8 helical membrane passes run 59 to 79 (ILTI…GFKQ), 112 to 132 (IFFW…WYVA), 152 to 172 (FVST…LIGL), 196 to 216 (ANLS…IVGF), 240 to 260 (FDVY…LVDF), 266 to 286 (SIVY…ILPY), 296 to 316 (SGFY…MGIN), and 320 to 340 (TATT…IGYF). 2 disordered regions span residues 367 to 393 (FNEI…SKVT) and 683 to 712 (ERSG…RGKY). Positions 369 to 386 (EITKNEKSKTGDSKEKES) are enriched in basic and acidic residues. A run of 4 helical transmembrane segments spans residues 726–746 (WLMI…LIVL), 975–995 (TMLY…AVLF), 1162–1182 (VLAI…TYSV), and 1342–1362 (VLTS…LLLF).

The protein localises to the membrane. The sequence is that of Tiny macrocysts protein C (tmcC) from Dictyostelium discoideum (Social amoeba).